A 427-amino-acid chain; its full sequence is UDP-N-acetylglucosamine--N-acetylmuramyl-(pentapeptide) pyrophosphoryl-undecaprenol N-acetylglucosamine transferase (427 aa).

Residues 29 to 31 (TGG), Asn-141, Arg-177, Ser-205, Ile-258, and Gln-303 contribute to the UDP-N-acetyl-alpha-D-glucosamine site. The segment at 408 to 427 (SLHPIPDSRFPIRTSAGGAQ) is disordered.

Belongs to the glycosyltransferase 28 family. MurG subfamily.

It localises to the cell inner membrane. It catalyses the reaction di-trans,octa-cis-undecaprenyl diphospho-N-acetyl-alpha-D-muramoyl-L-alanyl-D-glutamyl-meso-2,6-diaminopimeloyl-D-alanyl-D-alanine + UDP-N-acetyl-alpha-D-glucosamine = di-trans,octa-cis-undecaprenyl diphospho-[N-acetyl-alpha-D-glucosaminyl-(1-&gt;4)]-N-acetyl-alpha-D-muramoyl-L-alanyl-D-glutamyl-meso-2,6-diaminopimeloyl-D-alanyl-D-alanine + UDP + H(+). Its pathway is cell wall biogenesis; peptidoglycan biosynthesis. Its function is as follows. Cell wall formation. Catalyzes the transfer of a GlcNAc subunit on undecaprenyl-pyrophosphoryl-MurNAc-pentapeptide (lipid intermediate I) to form undecaprenyl-pyrophosphoryl-MurNAc-(pentapeptide)GlcNAc (lipid intermediate II). This chain is UDP-N-acetylglucosamine--N-acetylmuramyl-(pentapeptide) pyrophosphoryl-undecaprenol N-acetylglucosamine transferase, found in Xanthomonas campestris pv. campestris (strain 8004).